A 444-amino-acid polypeptide reads, in one-letter code: NADH-ubiquinone oxidoreductase chain 4 (444 aa).

13 helical membrane passes run 4-24 (YLFM…WWLV), 28-48 (IFLL…LSMI), 53-73 (GVDF…CLMI), 87-107 (NFFV…FSSL), 109-129 (LFSF…LILG), 141-161 (VYLM…LFSI), 173-193 (LIDF…AFLV), 212-232 (PISG…YGIF), 245-265 (FNYF…FVCF), 272-294 (SLIA…TMNW), 306-326 (GHGI…ELLG), 330-350 (LLIN…WFLL), and 373-393 (IISW…FSAV).

This sequence belongs to the complex I subunit 4 family.

Its subcellular location is the mitochondrion membrane. The catalysed reaction is a ubiquinone + NADH + 5 H(+)(in) = a ubiquinol + NAD(+) + 4 H(+)(out). Its function is as follows. Core subunit of the mitochondrial membrane respiratory chain NADH dehydrogenase (Complex I) that is believed to belong to the minimal assembly required for catalysis. Complex I functions in the transfer of electrons from NADH to the respiratory chain. The immediate electron acceptor for the enzyme is believed to be ubiquinone. The protein is NADH-ubiquinone oxidoreductase chain 4 (ND4) of Locusta migratoria (Migratory locust).